A 389-amino-acid polypeptide reads, in one-letter code: Mannitol-1-phosphate 5-dehydrogenase (389 aa).

Ala-5 to Gly-16 is an NAD(+) binding site. The active site involves Lys-214.

Belongs to the mannitol dehydrogenase family. Monomer.

It catalyses the reaction D-mannitol 1-phosphate + NAD(+) = beta-D-fructose 6-phosphate + NADH + H(+). Its function is as follows. Catalyzes the NAD(H)-dependent interconversion of D-fructose 6-phosphate and D-mannitol 1-phosphate in the mannitol metabolic pathway. This chain is Mannitol-1-phosphate 5-dehydrogenase, found in Talaromyces marneffei (strain ATCC 18224 / CBS 334.59 / QM 7333) (Penicillium marneffei).